Reading from the N-terminus, the 1203-residue chain is Cingulin (1203 aa).

The head stretch occupies residues methionine 7–alanine 357. The disordered stretch occupies residues glutamate 25–alanine 48. Residues alanine 48–glycine 62 carry the ZIM motif. The interval alanine 54–valine 67 is interaction with TJP1/ZO1. The interval glutamate 89–glutamine 268 is disordered. A phosphoserine mark is found at serine 96, serine 135, serine 137, serine 140, serine 155, and serine 165. The segment covering proline 166–glycine 191 has biased composition (polar residues). Positions glutamate 207 to serine 231 are enriched in basic and acidic residues. Phosphoserine is present on residues serine 214, serine 217, serine 258, serine 276, serine 338, and serine 351. The segment covering glycine 246–arginine 267 has biased composition (low complexity). Positions valine 358–alanine 1160 form a coiled coil. Lysine 579 is subject to N6-acetyllysine. The span at alanine 883–lysine 903 shows a compositional bias: basic and acidic residues. Disordered stretches follow at residues alanine 883–leucine 908 and alanine 1160–aspartate 1181. The tail stretch occupies residues serine 1161–cysteine 1203. 3 positions are modified to phosphoserine: serine 1175, serine 1176, and serine 1182.

It belongs to the cingulin family. Homodimer. Interacts with TJP1/ZO1 and SPEF1.

It is found in the cell junction. It localises to the tight junction. In terms of biological role, probably plays a role in the formation and regulation of the tight junction (TJ) paracellular permeability barrier. The polypeptide is Cingulin (Papio anubis (Olive baboon)).